We begin with the raw amino-acid sequence, 286 residues long: Bifunctional protein FolD (286 aa).

NADP(+)-binding positions include 165-167 and Ser190; that span reads GRS.

This sequence belongs to the tetrahydrofolate dehydrogenase/cyclohydrolase family. Homodimer.

It carries out the reaction (6R)-5,10-methylene-5,6,7,8-tetrahydrofolate + NADP(+) = (6R)-5,10-methenyltetrahydrofolate + NADPH. The enzyme catalyses (6R)-5,10-methenyltetrahydrofolate + H2O = (6R)-10-formyltetrahydrofolate + H(+). The protein operates within one-carbon metabolism; tetrahydrofolate interconversion. Catalyzes the oxidation of 5,10-methylenetetrahydrofolate to 5,10-methenyltetrahydrofolate and then the hydrolysis of 5,10-methenyltetrahydrofolate to 10-formyltetrahydrofolate. The chain is Bifunctional protein FolD from Staphylococcus aureus (strain MRSA252).